Here is a 215-residue protein sequence, read N- to C-terminus: MQDELVWIDCEMTGLDLGSDKLIEIAALVTDADLNILGDGVDVVMHADDAALSGMIDVVAEMHSRSGLIDEVKASTVDLATAEAMVLDYINEHVKQPKTAPLAGNSIATDRAFIARDMPTLDSFLHYRMIDVSSIKELCRRWYPRIYFGQPPKGLTHRALADIHESIRELRFYRRTAFVPQPGPSTSEIAAVVAELSDGAGAQEETDSAEAPQSG.

In terms of domain architecture, Exonuclease spans 5–170; it reads LVWIDCEMTG…ADIHESIREL (166 aa). Tyr-127 is a catalytic residue. A disordered region spans residues 196–215; sequence LSDGAGAQEETDSAEAPQSG.

It belongs to the oligoribonuclease family.

The protein resides in the cytoplasm. Functionally, 3'-to-5' exoribonuclease specific for small oligoribonucleotides. This is Oligoribonuclease from Mycobacterium bovis (strain BCG / Pasteur 1173P2).